A 610-amino-acid chain; its full sequence is Chitinase 63 (610 aa).

The N-terminal stretch at 1–30 (MRFRHKAAALAATLALPLAGLVGLASPAQA) is a signal peptide. Residues 31-134 (ATSATATFQK…KINGGSCDGS (104 aa)) enclose the CBM2 domain. Disordered stretches follow at residues 125 to 153 (KING…ASNI) and 208 to 239 (ARDT…PNPG). One can recognise a Fibronectin type-III domain in the interval 144 to 229 (APGTPTASNI…GSVKVTTTGG (86 aa)). The segment covering 213–224 (DQTGPASGSVKV) has biased composition (polar residues). A GH18 domain is found at 241–610 (EVKMGYFTNW…LVSAIDSGLK (370 aa)). Chitin-binding positions include 313-314 (DQ) and 340-343 (GGWT). Catalysis depends on E383, which acts as the Proton donor. Residues Y384, 450–453 (MTYD), and W590 each bind chitin.

Belongs to the glycosyl hydrolase 18 family. Chitinase class II subfamily.

The catalysed reaction is Random endo-hydrolysis of N-acetyl-beta-D-glucosaminide (1-&gt;4)-beta-linkages in chitin and chitodextrins.. This chain is Chitinase 63 (chtA), found in Streptomyces plicatus.